A 527-amino-acid chain; its full sequence is Tubulin-specific chaperone E (527 aa).

Ser-2 carries the N-acetylserine modification. The region spanning 27–71 is the CAP-Gly domain; that stretch reads GVVPPVAGPWLGVEWDNPERGKHDGSHEGTVYFQCRHPTGGSFIR. 7 LRR repeats span residues 154-175, 180-200, 205-226, 230-252, 253-274, 278-299, and 308-329; these read NIRK…IHIA, HLEV…SVLT, ALKV…RCAM, GLEE…DVLQ, TVKL…YLIA, RLEQ…DAGI, and SLKY…NELD. An LRRCT domain is found at 342-384; that stretch reads NPLTKEDKEAETARLLIIASIGQLKTLNKCEILPEERRRAELD. At Lys-463 the chain carries N6-acetyllysine. At Ser-495 the chain carries Phosphoserine.

This sequence belongs to the TBCE family. As to quaternary structure, supercomplex made of cofactors A to E. Cofactors A and D function by capturing and stabilizing tubulin in a quasi-native conformation. Cofactor E binds to the cofactor D-tubulin complex; interaction with cofactor C then causes the release of tubulin polypeptides that are committed to the native state. Cofactors B and E can form a heterodimer which binds to alpha-tubulin and enhances their ability to dissociate tubulin heterodimers. Interacts with TBCD.

It localises to the cytoplasm. It is found in the cytoskeleton. Functionally, tubulin-folding protein; involved in the second step of the tubulin folding pathway and in the regulation of tubulin heterodimer dissociation. Required for correct organization of microtubule cytoskeleton and mitotic splindle, and maintenance of the neuronal microtubule network. This Pongo abelii (Sumatran orangutan) protein is Tubulin-specific chaperone E (TBCE).